A 499-amino-acid polypeptide reads, in one-letter code: Glutamyl-tRNA(Gln) amidotransferase subunit A (499 aa).

Catalysis depends on charge relay system residues Lys79 and Ser159. Ser183 (acyl-ester intermediate) is an active-site residue.

This sequence belongs to the amidase family. GatA subfamily. In terms of assembly, heterotrimer of A, B and C subunits.

The catalysed reaction is L-glutamyl-tRNA(Gln) + L-glutamine + ATP + H2O = L-glutaminyl-tRNA(Gln) + L-glutamate + ADP + phosphate + H(+). In terms of biological role, allows the formation of correctly charged Gln-tRNA(Gln) through the transamidation of misacylated Glu-tRNA(Gln) in organisms which lack glutaminyl-tRNA synthetase. The reaction takes place in the presence of glutamine and ATP through an activated gamma-phospho-Glu-tRNA(Gln). The chain is Glutamyl-tRNA(Gln) amidotransferase subunit A from Granulibacter bethesdensis (strain ATCC BAA-1260 / CGDNIH1).